The primary structure comprises 744 residues: Probable ubiquitin carboxyl-terminal hydrolase MINDY-4 (744 aa).

A phosphoserine mark is found at S143, S220, and S224. Positions G211–K358 are disordered. A compositionally biased stretch (low complexity) spans V265–P277. Polar residues predominate over residues N290–S299. S295 carries the post-translational modification Phosphoserine. The span at Q300 to S310 shows a compositional bias: basic and acidic residues. C443 functions as the Nucleophile in the catalytic mechanism. H664 acts as the Proton acceptor in catalysis.

The protein belongs to the MINDY deubiquitinase family. FAM188 subfamily.

It carries out the reaction Thiol-dependent hydrolysis of ester, thioester, amide, peptide and isopeptide bonds formed by the C-terminal Gly of ubiquitin (a 76-residue protein attached to proteins as an intracellular targeting signal).. In terms of biological role, probable hydrolase that can remove 'Lys-48'-linked conjugated ubiquitin from proteins. The polypeptide is Probable ubiquitin carboxyl-terminal hydrolase MINDY-4 (Mindy4) (Mus musculus (Mouse)).